Reading from the N-terminus, the 159-residue chain is Putative phosphatidylinositol-3-phosphatase (159 aa).

An N-terminal signal peptide occupies residues 1–16; sequence MKRPSFLPVLIGTGFG. Transmembrane regions (helical) follow at residues 30 to 50, 54 to 74, 104 to 124, and 134 to 154; these read LLAS…ALLW, ALVV…ESCW, WYVI…PLGV, and VGVM…IAVA.

It localises to the membrane. The enzyme catalyses a 1,2-diacyl-sn-glycero-3-phospho-(1D-myo-inositol-3-phosphate) + H2O = a 1,2-diacyl-sn-glycero-3-phospho-(1D-myo-inositol) + phosphate. Functionally, may be responsible for the conversion of phosphatidylinositol phosphate diacylglycerol (PIP-DAG) to phosphatidylinositol diacylglycerol (PI-DAG), making it a key enzyme in the inositol glycerophospholipid biosynthesis pathway. This is Putative phosphatidylinositol-3-phosphatase from Bacteroides thetaiotaomicron (strain ATCC 29148 / DSM 2079 / JCM 5827 / CCUG 10774 / NCTC 10582 / VPI-5482 / E50).